The sequence spans 283 residues: Thymidylate synthase (283 aa).

Arg22 contributes to the dUMP binding site. Cys160 functions as the Nucleophile in the catalytic mechanism. Residues 180–183 (RSCD), Asn191, and 221–223 (HIY) each bind dUMP. Residue Asp183 coordinates (6R)-5,10-methylene-5,6,7,8-tetrahydrofolate. Ser282 lines the (6R)-5,10-methylene-5,6,7,8-tetrahydrofolate pocket.

This sequence belongs to the thymidylate synthase family. Bacterial-type ThyA subfamily. As to quaternary structure, homodimer.

The protein resides in the cytoplasm. It carries out the reaction dUMP + (6R)-5,10-methylene-5,6,7,8-tetrahydrofolate = 7,8-dihydrofolate + dTMP. The protein operates within pyrimidine metabolism; dTTP biosynthesis. Its function is as follows. Catalyzes the reductive methylation of 2'-deoxyuridine-5'-monophosphate (dUMP) to 2'-deoxythymidine-5'-monophosphate (dTMP) while utilizing 5,10-methylenetetrahydrofolate (mTHF) as the methyl donor and reductant in the reaction, yielding dihydrofolate (DHF) as a by-product. This enzymatic reaction provides an intracellular de novo source of dTMP, an essential precursor for DNA biosynthesis. This Pasteurella multocida (strain Pm70) protein is Thymidylate synthase.